A 586-amino-acid chain; its full sequence is MLSENTTILMANGEIKDIANVTANSYVMCADGSAARVINVTQGYQKIYNIQQKTKHRAFEGEPGRLDPRRRTVYQRLALQCTAGHKLSVRVPTKPLLEKSGRNATKYKVRWRNLQQCQTLDGRIIIIPKNHHKTFPMTVEGEFAAKRFIEEMERSKGEYFNFDIEVRDLDYLDAQLRISSCIRFGPVLAGNGVLSKFLTGRSDLVTPAVKSMAWMLGLWLGDSTTKEPEISVDSLDPKLMESLRENAKIWGLYLTVCDDHVPLRAKHVRLHYGDGPDENRKTRNLRKNNPFWKAVTILKFKRDLDGEKQIPEFMYGEHIEVREAFLAGLIDSDGYVVKKGEGPESYKIAIQTVYSSIMDGIVHISRSLGMSATVTTRSAREEIIEGRKVQCQFTYDCNVAGGTTSQNVLSYCRSGHKTREVPPIIKREPVYFSFTDDFQGESTVYGLTIEGHKNFLLGNKIEVKSCRGCCVGEQLKISQKKNLKHCVACPRKGIKYFYKDWSGKNRVCARCYGRYKFSGHHCINCKYVPEAREVKKAKDKGEKLGITPEGLPVKGPECIKCGGILQFDAVRGPHKSCGNNAGARIC.

Residues 215–370 (MLGLWLGDST…IVHISRSLGM (156 aa)) form the DOD-type homing endonuclease domain.

Rapidly degraded via the ubiquitin-26S proteasome system through two ubiquitin-conjugating enzymes UBC2/RAD6 and UBC3/CDC34.

It is found in the nucleus. Its function is as follows. Initiation of mating type interconversion. This protein is a site-specific endonuclease that cleaves a site in the mat locus on chromosome III. The double-strand break is followed by a unidirectional gene conversion event that replaces the information at the mat locus by information copied from either of the two homologous loci (HMR and HML) that reside at the extremity of the chromosome III. Endonuclease expression takes place in late G1 just before cells enter S phase. This is Homothallic switching endonuclease (HO) from Saccharomyces cerevisiae (strain ATCC 204508 / S288c) (Baker's yeast).